Reading from the N-terminus, the 156-residue chain is Small ribosomal subunit protein uS7 (156 aa).

It belongs to the universal ribosomal protein uS7 family. In terms of assembly, part of the 30S ribosomal subunit. Contacts proteins S9 and S11.

Functionally, one of the primary rRNA binding proteins, it binds directly to 16S rRNA where it nucleates assembly of the head domain of the 30S subunit. Is located at the subunit interface close to the decoding center, probably blocks exit of the E-site tRNA. This Streptomyces avermitilis (strain ATCC 31267 / DSM 46492 / JCM 5070 / NBRC 14893 / NCIMB 12804 / NRRL 8165 / MA-4680) protein is Small ribosomal subunit protein uS7.